A 466-amino-acid polypeptide reads, in one-letter code: 3-isopropylmalate dehydratase large subunit (466 aa).

The [4Fe-4S] cluster site is built by Cys-347, Cys-407, and Cys-410.

It belongs to the aconitase/IPM isomerase family. LeuC type 1 subfamily. In terms of assembly, heterodimer of LeuC and LeuD. The cofactor is [4Fe-4S] cluster.

It catalyses the reaction (2R,3S)-3-isopropylmalate = (2S)-2-isopropylmalate. The protein operates within amino-acid biosynthesis; L-leucine biosynthesis; L-leucine from 3-methyl-2-oxobutanoate: step 2/4. In terms of biological role, catalyzes the isomerization between 2-isopropylmalate and 3-isopropylmalate, via the formation of 2-isopropylmaleate. This chain is 3-isopropylmalate dehydratase large subunit, found in Shigella dysenteriae serotype 1 (strain Sd197).